Consider the following 1801-residue polypeptide: Laminin subunit beta-2 (1801 aa).

Positions 1–35 are cleaved as a signal peptide; that stretch reads MEWASGKPGRGRQGQPVPWELRLGLLLSVLAATLA. One can recognise a Laminin N-terminal domain in the interval 46–285; it reads SRGSCYPATG…ALYELVIRGN (240 aa). N-linked (GlcNAc...) asparagine glycosylation is present at Asn251. 19 disulfides stabilise this stretch: Cys286/Cys295, Cys288/Cys313, Cys315/Cys324, Cys327/Cys347, Cys350/Cys359, Cys352/Cys377, Cys380/Cys389, Cys392/Cys410, Cys413/Cys426, Cys415/Cys441, Cys443/Cys452, Cys455/Cys470, Cys473/Cys487, Cys475/Cys494, Cys496/Cys505, Cys508/Cys522, Cys525/Cys537, Cys527/Cys544, and Cys546/Cys555. Laminin EGF-like domains are found at residues 286–349, 350–412, 413–472, and 473–524; these read CFCY…ACRK, CECN…ACRP, CDCD…GCQR, and CQCN…GCRP. N-linked (GlcNAc...) asparagine glycosylation is present at Asn371. Residues 525 to 555 form the Laminin EGF-like 5; truncated domain; it reads CDCDVGGALDPQCDEATGQCPCRPHMIGRRC. The Laminin IV type B domain occupies 564–780; the sequence is RPFLDHLTWE…LLISASSLVY (217 aa). Disulfide bonds link Cys786-Cys798, Cys788-Cys805, Cys807-Cys816, Cys819-Cys831, Cys834-Cys846, Cys836-Cys853, Cys855-Cys864, Cys867-Cys877, Cys880-Cys889, Cys882-Cys896, Cys899-Cys908, Cys911-Cys927, Cys930-Cys946, Cys932-Cys957, Cys959-Cys968, Cys971-Cys986, Cys989-Cys1003, Cys991-Cys1010, Cys1013-Cys1022, Cys1025-Cys1038, Cys1041-Cys1061, Cys1043-Cys1068, Cys1070-Cys1079, Cys1082-Cys1095, Cys1098-Cys1110, Cys1100-Cys1117, Cys1119-Cys1128, Cys1131-Cys1143, Cys1146-Cys1158, Cys1148-Cys1165, Cys1167-Cys1176, and Cys1179-Cys1190. Laminin EGF-like domains are found at residues 786–833, 834–879, 880–929, 930–988, 989–1040, 1041–1097, 1098–1145, and 1146–1192; these read CQCD…GCQA, CQCS…NCRP, CVCN…QCRP, CPCP…RCQL, CECS…SCHR, CTCN…GCQP, CACH…QCRA, and CDCD…ACHP. The N-linked (GlcNAc...) asparagine glycan is linked to Asn1088. A domain II region spans residues 1193 to 1412; it reads CHACFGDWDR…LSLTGVNELV (220 aa). A glycan (N-linked (GlcNAc...) asparagine) is linked at Asn1252. Residues 1259 to 1306 adopt a coiled-coil conformation; sequence AKLVEATEGLRHEIGKTTERLTQLEAELTDVQDENFNANHALSGLERD. N-linked (GlcNAc...) asparagine glycans are attached at residues Asn1311 and Asn1351. Positions 1413 to 1445 are domain alpha; that stretch reads CGAPGDAPCATSPCGGAGCRDEDGQPRCGGLGC. Residues 1446-1801 form a domain I region; that stretch reads SGAAATADLA…LQVQIYNTCQ (356 aa). A coiled-coil region spans residues 1475-1529; it reads GILSRVSETRRQAEEAQQRAQAALDKANASRGQVEQANQELRELIQNVKDFLSQE. N-linked (GlcNAc...) asparagine glycosylation is present at Asn1502. Ser1535 carries the post-translational modification Phosphoserine. Residues 1576–1793 adopt a coiled-coil conformation; sequence LAHTMGDVRR…RSVLQAINLQ (218 aa). The segment covering 1684–1694 has biased composition (low complexity); the sequence is ASTAEETAGSA. The tract at residues 1684 to 1703 is disordered; it reads ASTAEETAGSAQSRAREAEK.

Laminin is a complex glycoprotein, consisting of three different polypeptide chains (alpha, beta, gamma), which are bound to each other by disulfide bonds into a cross-shaped molecule comprising one long and three short arms with globules at each end. Beta-2 is a subunit of laminin-3 (laminin-121 or S-laminin), laminin-4 (laminin-221 or S-merosin), laminin-7 (laminin-321 or KS-laminin), laminin-9 (laminin-421), laminin-11 (laminin-521), laminin-14 (laminin-423) and laminin-15 (laminin-523). In terms of tissue distribution, found in the basement membranes (major component). S-laminin is concentrated in the synaptic cleft of the neuromuscular junction.

It is found in the secreted. The protein localises to the extracellular space. It localises to the extracellular matrix. The protein resides in the basement membrane. Functionally, binding to cells via a high affinity receptor, laminin is thought to mediate the attachment, migration and organization of cells into tissues during embryonic development by interacting with other extracellular matrix components. The sequence is that of Laminin subunit beta-2 (Lamb2) from Rattus norvegicus (Rat).